Here is a 643-residue protein sequence, read N- to C-terminus: DNA polymerase III subunit tau (643 aa).

Residue 45–52 (GTRGVGKT) coordinates ATP. Positions 64, 73, 76, and 79 each coordinate Zn(2+). The disordered stretch occupies residues 385 to 404 (TPTQVPPQPQSAPQQAPTVP).

This sequence belongs to the DnaX/STICHEL family. As to quaternary structure, the DNA polymerase III holoenzyme complex contains at least 10 different subunits organized into 3 functionally essential subassemblies: the Pol III core, the beta sliding clamp processivity factor and the clamp-loading complex. The Pol III core (subunits alpha, epsilon and theta) contains the polymerase and the 3'-5' exonuclease proofreading activities. The polymerase is tethered to the template via the dimeric beta sliding clamp processivity factor. The clamp-loading complex (also called gamma complex) assembles the beta sliding clamp onto the primed template and plays a central role in the organization and communication at the replication fork. The clamp-loading complex contains delta, delta', psi and chi, and 3 copies of either or both of two different DnaX proteins, gamma and tau. The DNA replisome complex has a single clamp loader (3 tau and 1 each of delta, delta', psi and chi subunits) which binds 3 Pol III cores (1 core on the leading strand and 2 on the lagging strand) each with a beta sliding clamp dimer. Additional proteins in the replisome are other copies of gamma, psi and chi, Ssb, DNA helicase and RNA primase. The clamp loader hydrolyzes ATP to assemble the beta processivity factor onto the primed template and plays a central role in the organization and communication at the replication fork; the minimal complex to load the beta sliding clamp on DNA is delta, delta', gamma.

It carries out the reaction DNA(n) + a 2'-deoxyribonucleoside 5'-triphosphate = DNA(n+1) + diphosphate. In terms of biological role, part of the beta sliding clamp loading complex, which hydrolyzes ATP to load the beta clamp onto primed DNA to form the DNA replication pre-initiation complex. DNA polymerase III is a complex, multichain enzyme responsible for most of the replicative synthesis in bacteria. This DNA polymerase also exhibits 3'-5' exonuclease activity. The gamma complex (gamma(3),delta,delta') is thought to load beta dimers onto DNA by binding ATP which alters the complex's conformation so it can bind beta sliding clamp dimers and open them at one interface. Primed DNA is recognized, ATP is hydrolyzed releasing the gamma complex and closing the beta sliding clamp ring around the primed DNA. Its function is as follows. Serves as a scaffold to trimerize the core complex. Functionally, interacts with the delta and delta' subunits to transfer the beta subunit on the DNA. Interacts with ATP, drives ATP-induced conformational changes in the gamma complex that opens the beta sliding clamp ring. After loading of primed DNA ATP is hydrolyzed and the beta sliding clamp ring closes. The polypeptide is DNA polymerase III subunit tau (dnaX) (Escherichia coli (strain K12)).